A 264-amino-acid polypeptide reads, in one-letter code: Tryptophan synthase alpha chain (264 aa).

Catalysis depends on proton acceptor residues glutamate 49 and aspartate 60.

It belongs to the TrpA family. Tetramer of two alpha and two beta chains.

The catalysed reaction is (1S,2R)-1-C-(indol-3-yl)glycerol 3-phosphate + L-serine = D-glyceraldehyde 3-phosphate + L-tryptophan + H2O. It participates in amino-acid biosynthesis; L-tryptophan biosynthesis; L-tryptophan from chorismate: step 5/5. The alpha subunit is responsible for the aldol cleavage of indoleglycerol phosphate to indole and glyceraldehyde 3-phosphate. This Laribacter hongkongensis (strain HLHK9) protein is Tryptophan synthase alpha chain.